Here is a 190-residue protein sequence, read N- to C-terminus: Segregation and condensation protein B (190 aa).

The protein belongs to the ScpB family. In terms of assembly, homodimer. Homodimerization may be required to stabilize the binding of ScpA to the Smc head domains. Component of a cohesin-like complex composed of ScpA, ScpB and the Smc homodimer, in which ScpA and ScpB bind to the head domain of Smc. The presence of the three proteins is required for the association of the complex with DNA.

It localises to the cytoplasm. In terms of biological role, participates in chromosomal partition during cell division. May act via the formation of a condensin-like complex containing Smc and ScpA that pull DNA away from mid-cell into both cell halves. This is Segregation and condensation protein B from Bacillus cereus (strain ZK / E33L).